The chain runs to 1198 residues: Structural polyprotein (1198 aa).

The segment at 2–15 is interaction with host EXOC1; the sequence is TKKPGGPGKNRAIN. Residues 37–72 form a hydrophobic; homodimerization of capsid protein C region; that stretch reads LLDGRGPVRFVLALITFFKFTALAPTKALLGRWRAV. The propeptide at 106–127 is ER anchor for the capsid protein C, removed in mature form by serine protease NS3; the sequence is GGNESSIMWLASLAIVIACAGA. The chain crosses the membrane as a helical span at residues 110-130; it reads SSIMWLASLAIVIACAGAMKL. N-linked (GlcNAc...) asparagine; by host glycosylation is present at N142. A run of 2 helical transmembrane segments spans residues 254 to 274 and 280 to 294; these read WIIRNPGYAFLAAALGWMLGS and VVFTILLLLVAPAYS. Cystine bridges form between C297-C324, C354-C410, C354-C415, C368-C399, C386-C410, and C386-C415. A fusion peptide region spans residues 392-405; sequence DRGWGNGCGLFGKG. N448 carries N-linked (GlcNAc...) asparagine; by host glycosylation. Disulfide bonds link C484–C581 and C598–C629. 2 helical membrane-spanning segments follow: residues 747–767 and 774–794; these read FGGMSWITQGLMGALLLWMGV and IALAFLATGGVLVFLATNVHA. Cystine bridges form between C798–C809, C849–C937, C973–C1017, C1074–C1123, C1085–C1106, and C1107–C1110. N924 and N1001 each carry an N-linked (GlcNAc...) asparagine; by host glycan. The disordered stretch occupies residues 1151 to 1178; sequence MIDPFSAGPSGDVSGHPGGPSQEVDGQI.

As to quaternary structure, homodimer. Interacts (via N-terminus) with host EXOC1 (via C-terminus); this interaction results in EXOC1 degradation through the proteasome degradation pathway. Interacts with host CAPRIN1; this interaction is involved in the suppression of the integrated stress response. In terms of assembly, forms heterodimers with envelope protein E in the endoplasmic reticulum and Golgi. Homodimer; in the endoplasmic reticulum and Golgi. Interacts with protein prM. Interacts with non-structural protein 1. Genome polyprotein: Specific enzymatic cleavages in vivo yield mature proteins. Cleavages in the lumen of endoplasmic reticulum are performed by host signal peptidase, whereas cleavages in the cytoplasmic side are performed by serine protease NS3. Signal cleavage at the 2K-4B site requires a prior NS3 protease-mediated cleavage at the 4A-2K site. Post-translationally, cleaved in post-Golgi vesicles by a host furin, releasing the mature small envelope protein M, and peptide pr. This cleavage is incomplete as up to 30% of viral particles still carry uncleaved prM. In terms of processing, N-glycosylated.

Its subcellular location is the secreted. The protein localises to the virion membrane. It localises to the host endoplasmic reticulum membrane. Functionally, plays a role in virus budding by binding to the cell membrane and gathering the viral RNA into a nucleocapsid that forms the core of a mature virus particle. During virus entry, may induce genome penetration into the host cytoplasm after hemifusion induced by the surface proteins. Can migrate to the cell nucleus where it modulates host functions. Overcomes the anti-viral effects of host EXOC1 by sequestering and degrading the latter through the proteasome degradation pathway. Inhibits the integrated stress response (ISR) in the infected cell by binding to host CAPRIN1. Inhibits RNA silencing by interfering with host Dicer. Its function is as follows. Prevents premature fusion activity of envelope proteins in trans-Golgi by binding to envelope protein E at pH6.0. After virion release in extracellular space, gets dissociated from E dimers. In terms of biological role, acts as a chaperone for envelope protein E during intracellular virion assembly by masking and inactivating envelope protein E fusion peptide. prM is the only viral peptide matured by host furin in the trans-Golgi network probably to avoid catastrophic activation of the viral fusion activity in acidic Golgi compartment prior to virion release. prM-E cleavage is inefficient, and many virions are only partially matured. These uncleaved prM would play a role in immune evasion. Functionally, may play a role in virus budding. Exerts cytotoxic effects by activating a mitochondrial apoptotic pathway through M ectodomain. May display a viroporin activity. Binds to host cell surface receptor and mediates fusion between viral and cellular membranes. Envelope protein is synthesized in the endoplasmic reticulum in the form of heterodimer with protein prM. They play a role in virion budding in the ER, and the newly formed immature particle is covered with 60 spikes composed of heterodimer between precursor prM and envelope protein E. The virion is transported to the Golgi apparatus where the low pH causes dissociation of PrM-E heterodimers and formation of E homodimers. prM-E cleavage is inefficient, and many virions are only partially matured. These uncleaved prM would play a role in immune evasion. This chain is Structural polyprotein, found in Ardeidae (herons).